The following is a 128-amino-acid chain: T-cell leukemia/lymphoma protein 1B (128 aa).

It belongs to the TCL1 family. In terms of assembly, interacts with AKT1 and AKT2 (via PH domain). Does not interact with AKT3. Expressed in a variety of tissues including placenta and testis.

In terms of biological role, enhances the phosphorylation and activation of AKT1 and AKT2. This Homo sapiens (Human) protein is T-cell leukemia/lymphoma protein 1B (TCL1B).